The primary structure comprises 249 residues: MKYLVDTHTHTIASTHAYSTLQEYIAMAKHKGIKLFATTDHGPDMADAPHFWHFVNLRVLPRVVDGVGILRGIEANIKNVVGEIDFFGDYLQDLDIVLAGFHEPVFAPSNKETHTAAMINCINSGHVDIITHPGNPAYPIDIEAVAKAAAENNVALEINNSSFLVSRKGSEHNCLAIAKAVKEAGGLLVMGSDSHVAYSLGDFTLAEQIVEQADFPIERLLNRSPEALLAFLSARGHASLDEYSVLLES.

Zn(2+)-binding residues include histidine 8, histidine 10, histidine 16, histidine 41, glutamate 74, histidine 102, histidine 132, aspartate 193, and histidine 195.

Belongs to the PHP family. Requires Zn(2+) as cofactor.

This Shewanella halifaxensis (strain HAW-EB4) protein is Probable phosphatase Shal_1519.